The chain runs to 199 residues: Ribonuclease HII (199 aa).

The region spanning 12–199 (DLLAGTDEAG…FGPVKKILEG (188 aa)) is the RNase H type-2 domain. A divalent metal cation contacts are provided by Asp-18, Glu-19, and Asp-110.

It belongs to the RNase HII family. It depends on Mn(2+) as a cofactor. Requires Mg(2+) as cofactor.

It is found in the cytoplasm. It carries out the reaction Endonucleolytic cleavage to 5'-phosphomonoester.. Functionally, endonuclease that specifically degrades the RNA of RNA-DNA hybrids. The polypeptide is Ribonuclease HII (Marinomonas sp. (strain MWYL1)).